The primary structure comprises 464 residues: Cysteine--tRNA ligase (464 aa).

A Zn(2+)-binding site is contributed by cysteine 28. The 'HIGH' region signature appears at 30–40 (PTVYDTAHIGN). Zn(2+)-binding residues include cysteine 212, histidine 237, and glutamate 241. Residues 270–274 (KMSKS) carry the 'KMSKS' region motif. ATP is bound at residue lysine 273.

The protein belongs to the class-I aminoacyl-tRNA synthetase family. In terms of assembly, monomer. The cofactor is Zn(2+).

Its subcellular location is the cytoplasm. The catalysed reaction is tRNA(Cys) + L-cysteine + ATP = L-cysteinyl-tRNA(Cys) + AMP + diphosphate. The protein is Cysteine--tRNA ligase of Wolbachia pipientis subsp. Culex pipiens (strain wPip).